Here is a 199-residue protein sequence, read N- to C-terminus: Ribonuclease HII (199 aa).

Residues 1 to 199 (MCVCGIDEAG…TYKNLVQGHI (199 aa)) form the RNase H type-2 domain. Asp-7, Glu-8, and Asp-97 together coordinate a divalent metal cation.

Belongs to the RNase HII family. Mn(2+) serves as cofactor. It depends on Mg(2+) as a cofactor.

It localises to the cytoplasm. It carries out the reaction Endonucleolytic cleavage to 5'-phosphomonoester.. Functionally, endonuclease that specifically degrades the RNA of RNA-DNA hybrids. The chain is Ribonuclease HII from Picrophilus torridus (strain ATCC 700027 / DSM 9790 / JCM 10055 / NBRC 100828 / KAW 2/3).